Reading from the N-terminus, the 212-residue chain is uncharacterized protein (212 aa).

An N-terminal signal peptide occupies residues 1-18; that stretch reads MQLTQVLAVAILAAGVSA. The interval 108-180 is disordered; sequence VSHNRVNAKQ…KDYGHKDYGH (73 aa). Basic and acidic residues predominate over residues 117-180; sequence QRRDDKKDYG…KDYGHKDYGH (64 aa). The segment at 120–210 is 15 X 5 AA tandem repeats of K-D-Y-G-H; sequence DDKKDYGKND…KDYGYKGYDD (91 aa). The stretch at 123 to 127 is repeat 1; the sequence is KDYGK. One copy of the 2; truncated repeat lies at 128–132; the sequence is NDYGK. 3 repeat units span residues 133 to 137, 138 to 142, and 143 to 147. A 6; truncated repeat occupies 148–152; it reads KEYDP. 5 repeat units span residues 166–170, 171–175, 176–180, 181–185, and 186–190. One copy of the 12; truncated repeat lies at 191 to 195; it reads DDYGY. A 13; truncated repeat occupies 196-200; sequence KGYDD. A 14; truncated repeat occupies 201–205; it reads KDYGY. A 15; truncated repeat occupies 206 to 210; the sequence is KGYDD.

The protein resides in the secreted. This is an uncharacterized protein from Arthroderma benhamiae (strain ATCC MYA-4681 / CBS 112371) (Trichophyton mentagrophytes).